Here is a 288-residue protein sequence, read N- to C-terminus: 4-diphosphocytidyl-2-C-methyl-D-erythritol kinase (288 aa).

Lys11 is an active-site residue. 93 to 103 (PFGAGLGGGSS) provides a ligand contact to ATP. Asp135 is an active-site residue.

This sequence belongs to the GHMP kinase family. IspE subfamily.

The catalysed reaction is 4-CDP-2-C-methyl-D-erythritol + ATP = 4-CDP-2-C-methyl-D-erythritol 2-phosphate + ADP + H(+). It functions in the pathway isoprenoid biosynthesis; isopentenyl diphosphate biosynthesis via DXP pathway; isopentenyl diphosphate from 1-deoxy-D-xylulose 5-phosphate: step 3/6. Catalyzes the phosphorylation of the position 2 hydroxy group of 4-diphosphocytidyl-2C-methyl-D-erythritol. The chain is 4-diphosphocytidyl-2-C-methyl-D-erythritol kinase from Chlorobium limicola (strain DSM 245 / NBRC 103803 / 6330).